Consider the following 911-residue polypeptide: Ribonuclease J (911 aa).

The transit peptide at 1-70 directs the protein to the chloroplast; the sequence is MMKPASLQGF…VTSAPASGTS (70 aa). Residues 58–90 are disordered; that stretch reads SCSVTSAPASGTSSSSKTPRRRSGRLEGVGKSM. Residues 63 to 74 are compositionally biased toward low complexity; that stretch reads SAPASGTSSSSK. Zn(2+) is bound by residues H175, H177, D179, H180, H245, and D267. Residues 336–338 and 468–472 each bind substrate; these read ASN and HTSGH. H494 contributes to the Zn(2+) binding site. Disordered regions lie at residues 695-723 and 735-824; these read VEGN…TLED and EETA…WKPE. 2 stretches are compositionally biased toward basic and acidic residues: residues 713–722 and 783–795; these read SPKEVDRTLE and ADTE…KENS. The segment covering 796-806 has biased composition (acidic residues); the sequence is RDDDELADASD. Residues 813–877 enclose the Myb-like domain; it reads PKRVRKNKWK…QCKSLWASLI (65 aa).

It belongs to the metallo-beta-lactamase superfamily. RNA-metabolizing metallo-beta-lactamase-like family. Bacterial RNase J subfamily. As to quaternary structure, homodimer. May be a subunit of the RNA degradosome. Requires Zn(2+) as cofactor. In terms of tissue distribution, moslty expressed in inflorescences, seedlings, leaves, flowers and flower buds, and, to a lower extent, in stems, siliques and roots.

The protein localises to the plastid. The protein resides in the chloroplast. Functionally, essential protein required during embryogenesis, especially in initiating and maintaining the organization of shoot apical meristems (SAMs), cotyledons, and hypocotyls. Involved in auxin-mediated pathways during embryogenesis. RNase that has both endonuclease and 5'-3' exonuclease activities. Involved in RNA surveillance to prevent overaccumulation of antisense RNA. Probably involved in maturation of rRNA and in some organisms also mRNA maturation and/or decay. This Arabidopsis thaliana (Mouse-ear cress) protein is Ribonuclease J.